A 94-amino-acid polypeptide reads, in one-letter code: Co-chaperonin GroES (94 aa).

This sequence belongs to the GroES chaperonin family. As to quaternary structure, heptamer of 7 subunits arranged in a ring. Interacts with the chaperonin GroEL.

Its subcellular location is the cytoplasm. In terms of biological role, together with the chaperonin GroEL, plays an essential role in assisting protein folding. The GroEL-GroES system forms a nano-cage that allows encapsulation of the non-native substrate proteins and provides a physical environment optimized to promote and accelerate protein folding. GroES binds to the apical surface of the GroEL ring, thereby capping the opening of the GroEL channel. In Brevibacillus choshinensis, this protein is Co-chaperonin GroES.